The primary structure comprises 644 residues: 3-isopropylmalate dehydratase (644 aa).

Residues C400, C460, and C463 each contribute to the [4Fe-4S] cluster site. A disordered region spans residues 521–568 (SEIPGTPKQSPRQEVVAEFESEEDDVDSSSVDSAPVATPPSTGDSAGM). Residues 537–547 (AEFESEEDDVD) show a composition bias toward acidic residues.

Belongs to the aconitase/IPM isomerase family. As to quaternary structure, monomer. [4Fe-4S] cluster is required as a cofactor.

It carries out the reaction (2R,3S)-3-isopropylmalate = (2S)-2-isopropylmalate. It functions in the pathway amino-acid biosynthesis; L-leucine biosynthesis; L-leucine from 3-methyl-2-oxobutanoate: step 2/4. In terms of biological role, catalyzes the isomerization between 2-isopropylmalate and 3-isopropylmalate, via the formation of 2-isopropylmaleate. This Mucor circinelloides f. lusitanicus (Mucor racemosus var. lusitanicus) protein is 3-isopropylmalate dehydratase (LEUA).